A 448-amino-acid polypeptide reads, in one-letter code: Beclin-1 (448 aa).

Met-1 carries the N-acetylmethionine modification. Phosphoserine occurs at positions 14 and 29. Positions 47–72 (TTAQAKPGESQEEEANSGEEPFIETR) are disordered. Ser-88, Ser-91, and Ser-94 each carry phosphoserine; by AMPK. A BH3 motif is present at residues 106–125 (TMENLSRRLKVTGDLFDIMS). Residues 110 to 157 (LSRRLKVTGDLFDIMSGQTDVDHPLCEECTDTLLDQLDTQLNVTENEC) form an interaction with BCL2 and BCL2L1 isoform Bcl-X(L) region. Thr-117 bears the Phosphothreonine; by DAPK1 mark. Residues 140–267 (DTLLDQLDTQ…QLDKLKKTNV (128 aa)) are a coiled coil. The tract at residues 243-448 (DELKSVENQM…AWVSSQFYNK (206 aa)) is evolutionary conserved domain (ECD). Residues Lys-400 and Lys-435 each participate in a glycyl lysine isopeptide (Lys-Gly) (interchain with G-Cter in ubiquitin) cross-link. The segment at 423 to 448 (WTKALKFMLTNLKWGLAWVSSQFYNK) is required for membrane-association.

It belongs to the beclin family. In terms of assembly, a homodimeric form is proposed to exist; this metastable form readily transits to ATG14- or UVRAG-containing complexes with BECN1:UVRAG being more stable than BECN1:ATG14. Component of the PI3K (PI3KC3/PI3K-III/class III phosphatidylinositol 3-kinase) complex the core of which is composed of the catalytic subunit PIK3C3, the regulatory subunit PIK3R4 and BECN1 associating with additional regulatory/auxiliary subunits to form alternative complex forms. Alternative complex forms containing a fourth regulatory subunit in a mutually exclusive manner are PI3K complex I (PI3KC3-C1) containing ATG14, and PI3K complex II (PI3KC3-C2) containing UVRAG. PI3KC3-C1 displays a V-shaped architecture with PIK3R4 serving as a bridge between PIK3C3 and the ATG14:BECN1 subcomplex. Both, PI3KC3-C1 and PI3KC3-C2, can associate with further regulatory subunits, such as RUBCN, SH3GLB1/Bif-1 and AMBRA1. PI3KC3-C1 probably associates with PIK3CB. Forms a complex with PPP2CA and AMBRA1; AMBRA1 and BECN1 components of the complex regulate MYC stability via different pathways. Component of the complex, at least composed of LRPPRC, BECN1 and BCL2; the interactions prevent BECN1 from forming an autophagy-inducing complex with PIK3C3. Interacts with AMBRA1, GOPC, GRID2. Interacts with BCL2 and BCL2L1 isoform Bcl-X(L); the interaction inhibits BECN1 function in promoting autophagy by interfering with the formation of the PI3K complex. Interacts with cytosolic HMGB1; inhibits the interaction of BECN1 and BCL2 leading to promotion of autophagy. Interacts with USP10, USP13, DAPK1, RAB39A. Interacts with SLAMF1. Interacts with the poly-Gln domain of ATXN3; the interaction causes deubiquitination at Lys-400 and stabilizes BECN1. Interacts with VMP1. Interacts with TRIM5; the interaction causes activation of BECN1 by causing its dissociation from its inhibitors BCL2 and TAB2. Interacts with active ULK1 (phosphorylated on 'Ser-317') and MEFV simultaneously. Interacts with WDR81 and WDR91; negatively regulates the PI3 kinase/PI3K activity associated with endosomal membranes. Interacts with LAPTM4B; competes with EGFR for LAPTM4B binding; regulates EGFR activity. Interacts with TRIM50. Interacts with TRIM16. Interacts with ATG14; this interaction is increased in the absence of TMEM39A. Interacts with WASHC1; preventing interaction with AMBRA1 and the DCX(AMBRA1) complex and subsequent ubiquitination. Interacts with TRIM17. Interacts with BCL2L10/BCL-B (via BH1 domain). Interacts with SH3BGRL. Interacts with IRGM; enhancing BECN1-interacting partners and influencing the composition of the BECN1 complex. Interacts with ARMC3. Interacts with LRPPRC. Post-translationally, phosphorylation at Thr-117 by DAPK1 reduces its interaction with BCL2 and BCL2L1 and promotes induction of autophagy. In response to autophagic stimuli, phosphorylated at serine residues by AMPK in an ATG14-dependent manner, and this phosphorylation is critical for maximally efficient autophagy. Polyubiquitinated by NEDD4, both with 'Lys-11'- and 'Lys-63'-linkages. 'Lys-11'-linked polyubiquitination leads to degradation and is enhanced when the stabilizing interaction partner VPS34 is depleted. Deubiquitinated by USP10 and USP13, leading to stabilize the PIK3C3/VPS34-containing complexes. Polyubiquitinated at Lys-400 with 'Lys-48'-linkages. 'Lys-48'-linked polyubiquitination of Lys-400 leads to degradation. Deubiquitinated by ATXN3, leading to stabilization. Ubiquitinated at Lys-435 via 'Lys-63'-linkage by the DCX(AMBRA1) complex, thereby increasing the association between BECN1 and PIK3C3 to promote PIK3C3 activity. 'Lys-48'-linked ubiquitination by RNF216 leads to proteasomal degradation and autophagy inhibition. In terms of processing, proteolytically processed by caspases including CASP8 and CASP3; the C-terminal fragments lack autophagy-inducing capacity and are proposed to induce apoptosis. Thus the cleavage is proposed to be an determinant to switch from autophagy to apoptosis pathways affecting cellular homeostasis including viral infections and survival of tumor cells.

It is found in the cytoplasm. The protein localises to the golgi apparatus. It localises to the trans-Golgi network membrane. The protein resides in the endosome membrane. Its subcellular location is the endoplasmic reticulum membrane. It is found in the mitochondrion membrane. The protein localises to the cytoplasmic vesicle. It localises to the autophagosome. The protein resides in the mitochondrion. Its subcellular location is the nucleus. Functionally, plays a central role in autophagy. Acts as a core subunit of the PI3K complex that mediates formation of phosphatidylinositol 3-phosphate; different complex forms are believed to play a role in multiple membrane trafficking pathways: PI3KC3-C1 is involved in initiation of autophagosomes and PI3KC3-C2 in maturation of autophagosomes and endocytosis. Involved in regulation of degradative endocytic trafficking and required for the abscission step in cytokinesis, probably in the context of PI3KC3-C2. Essential for the formation of PI3KC3-C2 but not PI3KC3-C1 PI3K complex forms. Involved in endocytosis. May play a role in antiviral host defense. In terms of biological role, beclin-1-C 35 kDa localized to mitochondria can promote apoptosis; it induces the mitochondrial translocation of BAX and the release of proapoptotic factors. This Rattus norvegicus (Rat) protein is Beclin-1 (Becn1).